Here is a 674-residue protein sequence, read N- to C-terminus: Methionine--tRNA ligase (674 aa).

A 'HIGH' region motif is present at residues 11 to 21; that stretch reads PYANGDLHLGH. Zn(2+) contacts are provided by cysteine 142, cysteine 145, cysteine 155, and cysteine 158. The short motif at 330–334 is the 'KMSKS' region element; sequence KMSKS. Lysine 333 provides a ligand contact to ATP. One can recognise a tRNA-binding domain in the interval 574–674; the sequence is DFMKVDLRIA…EGAQPGMRVK (101 aa).

Belongs to the class-I aminoacyl-tRNA synthetase family. MetG type 1 subfamily. Homodimer. Zn(2+) serves as cofactor.

The protein resides in the cytoplasm. It catalyses the reaction tRNA(Met) + L-methionine + ATP = L-methionyl-tRNA(Met) + AMP + diphosphate. Is required not only for elongation of protein synthesis but also for the initiation of all mRNA translation through initiator tRNA(fMet) aminoacylation. The protein is Methionine--tRNA ligase of Francisella tularensis subsp. holarctica (strain OSU18).